Consider the following 124-residue polypeptide: Immunoglobulin lambda variable 5-52 (124 aa).

Residues 1-19 (MAWTLLLLVLLSHCTGSLS) form the signal peptide. The interval 20–44 (QPVLTQPSSHSASSGASVRLTCMLS) is framework-1. Residues 21-124 (PVLTQPSSHS…CGTWHSNSKT (104 aa)) enclose the Ig-like domain. A disulfide bridge connects residues Cys-41 and Cys-115. Residues 45-53 (SGFSVGDFW) form a complementarity-determining-1 region. The framework-2 stretch occupies residues 54 to 70 (IRWYQQKPGNPPRYLLY). The interval 71-77 (YHSDSNK) is complementarity-determining-2. Residues 78-115 (GQGSGVPSRFSGSNDASANAGILRISGLQPEDEADYYC) form a framework-3 region. The interval 116 to 124 (GTWHSNSKT) is complementarity-determining-3.

In terms of assembly, immunoglobulins are composed of two identical heavy chains and two identical light chains; disulfide-linked.

The protein resides in the secreted. It localises to the cell membrane. V region of the variable domain of immunoglobulin light chains that participates in the antigen recognition. Immunoglobulins, also known as antibodies, are membrane-bound or secreted glycoproteins produced by B lymphocytes. In the recognition phase of humoral immunity, the membrane-bound immunoglobulins serve as receptors which, upon binding of a specific antigen, trigger the clonal expansion and differentiation of B lymphocytes into immunoglobulins-secreting plasma cells. Secreted immunoglobulins mediate the effector phase of humoral immunity, which results in the elimination of bound antigens. The antigen binding site is formed by the variable domain of one heavy chain, together with that of its associated light chain. Thus, each immunoglobulin has two antigen binding sites with remarkable affinity for a particular antigen. The variable domains are assembled by a process called V-(D)-J rearrangement and can then be subjected to somatic hypermutations which, after exposure to antigen and selection, allow affinity maturation for a particular antigen. The protein is Immunoglobulin lambda variable 5-52 of Homo sapiens (Human).